Consider the following 291-residue polypeptide: Bifunctional protein FolD 1 (291 aa).

Residues G167 to S169, I192, and I233 each bind NADP(+).

This sequence belongs to the tetrahydrofolate dehydrogenase/cyclohydrolase family. Homodimer.

The catalysed reaction is (6R)-5,10-methylene-5,6,7,8-tetrahydrofolate + NADP(+) = (6R)-5,10-methenyltetrahydrofolate + NADPH. It carries out the reaction (6R)-5,10-methenyltetrahydrofolate + H2O = (6R)-10-formyltetrahydrofolate + H(+). Its pathway is one-carbon metabolism; tetrahydrofolate interconversion. Catalyzes the oxidation of 5,10-methylenetetrahydrofolate to 5,10-methenyltetrahydrofolate and then the hydrolysis of 5,10-methenyltetrahydrofolate to 10-formyltetrahydrofolate. The protein is Bifunctional protein FolD 1 of Pseudomonas putida (strain ATCC 47054 / DSM 6125 / CFBP 8728 / NCIMB 11950 / KT2440).